A 504-amino-acid chain; its full sequence is Anaerobic nitric oxide reductase transcription regulator NorR (504 aa).

Aspartate 57 carries the 4-aspartylphosphate modification. Positions methionine 187–valine 416 constitute a Sigma-54 factor interaction domain. Residues glycine 215–glutamate 222 and alanine 278–glutamate 287 contribute to the ATP site. Positions tryptophan 479–lysine 498 form a DNA-binding region, H-T-H motif.

It functions in the pathway nitrogen metabolism; nitric oxide reduction. Required for the expression of anaerobic nitric oxide (NO) reductase, acts as a transcriptional activator for at least the norVW operon. Activation also requires sigma-54. This chain is Anaerobic nitric oxide reductase transcription regulator NorR, found in Shigella dysenteriae serotype 1 (strain Sd197).